The chain runs to 324 residues: NADH-ubiquinone oxidoreductase chain 1 (324 aa).

The next 8 helical transmembrane spans lie at Ile5 to Phe25, Phe75 to Leu95, Leu106 to Gly126, Ile146 to Phe166, Thr177 to Ala197, Leu228 to Phe248, Gln259 to Ile279, and Phe299 to Ser319.

This sequence belongs to the complex I subunit 1 family.

Its subcellular location is the mitochondrion inner membrane. It carries out the reaction a ubiquinone + NADH + 5 H(+)(in) = a ubiquinol + NAD(+) + 4 H(+)(out). Core subunit of the mitochondrial membrane respiratory chain NADH dehydrogenase (Complex I) that is believed to belong to the minimal assembly required for catalysis. Complex I functions in the transfer of electrons from NADH to the respiratory chain. The immediate electron acceptor for the enzyme is believed to be ubiquinone. The chain is NADH-ubiquinone oxidoreductase chain 1 (MT-ND1) from Squalus acanthias (Spiny dogfish).